Consider the following 392-residue polypeptide: Trans-2-enoyl-CoA reductase [NADH] (392 aa).

NAD(+) is bound by residues Phe-74 to Glu-75, Asp-111 to Ala-112, and Leu-141 to Ala-142. Residue Tyr-227 participates in substrate binding. Tyr-237 acts as the Proton donor in catalysis. Residues Lys-246 and Val-276–Thr-278 each bind NAD(+).

It belongs to the TER reductase family. Monomer.

The enzyme catalyses a 2,3-saturated acyl-CoA + NAD(+) = a (2E)-enoyl-CoA + NADH + H(+). The protein operates within lipid metabolism; fatty acid biosynthesis. Involved in the fatty acid synthesis (FAS II). Catalyzes the reduction of a carbon-carbon double bond in an enoyl moiety that is covalently linked to a coenzyme A (CoA). The protein is Trans-2-enoyl-CoA reductase [NADH] of Brachyspira hyodysenteriae (strain ATCC 49526 / WA1).